A 474-amino-acid polypeptide reads, in one-letter code: tRNA-2-methylthio-N(6)-dimethylallyladenosine synthase (474 aa).

One can recognise an MTTase N-terminal domain in the interval 3–120 (KKLHIKTWGC…LPEMINSVRG (118 aa)). Cys12, Cys49, Cys83, Cys157, Cys161, and Cys164 together coordinate [4Fe-4S] cluster. One can recognise a Radical SAM core domain in the interval 143 to 375 (RAEGPTAFVS…QERINQQAMA (233 aa)). A TRAM domain is found at 378–441 (RRMLGTTQRI…PNSLRGKVVR (64 aa)).

It belongs to the methylthiotransferase family. MiaB subfamily. As to quaternary structure, monomer. [4Fe-4S] cluster is required as a cofactor.

Its subcellular location is the cytoplasm. It carries out the reaction N(6)-dimethylallyladenosine(37) in tRNA + (sulfur carrier)-SH + AH2 + 2 S-adenosyl-L-methionine = 2-methylsulfanyl-N(6)-dimethylallyladenosine(37) in tRNA + (sulfur carrier)-H + 5'-deoxyadenosine + L-methionine + A + S-adenosyl-L-homocysteine + 2 H(+). Functionally, catalyzes the methylthiolation of N6-(dimethylallyl)adenosine (i(6)A), leading to the formation of 2-methylthio-N6-(dimethylallyl)adenosine (ms(2)i(6)A) at position 37 in tRNAs that read codons beginning with uridine. The chain is tRNA-2-methylthio-N(6)-dimethylallyladenosine synthase from Salmonella paratyphi A (strain ATCC 9150 / SARB42).